A 312-amino-acid chain; its full sequence is Ribosomal RNA small subunit methyltransferase H (312 aa).

Residues 35–37 (GGH), Asp55, Phe85, Asp101, and Gln108 contribute to the S-adenosyl-L-methionine site.

Belongs to the methyltransferase superfamily. RsmH family.

The protein localises to the cytoplasm. It carries out the reaction cytidine(1402) in 16S rRNA + S-adenosyl-L-methionine = N(4)-methylcytidine(1402) in 16S rRNA + S-adenosyl-L-homocysteine + H(+). Functionally, specifically methylates the N4 position of cytidine in position 1402 (C1402) of 16S rRNA. This Buchnera aphidicola subsp. Acyrthosiphon pisum (strain Tuc7) protein is Ribosomal RNA small subunit methyltransferase H.